Here is a 526-residue protein sequence, read N- to C-terminus: Exodeoxyribonuclease 7 large subunit (526 aa).

A disordered region spans residues 496-526 (GAMTTEGGTPPAGAKKRSAKPADPTKQGSLF).

The protein belongs to the XseA family. As to quaternary structure, heterooligomer composed of large and small subunits.

It is found in the cytoplasm. It catalyses the reaction Exonucleolytic cleavage in either 5'- to 3'- or 3'- to 5'-direction to yield nucleoside 5'-phosphates.. Functionally, bidirectionally degrades single-stranded DNA into large acid-insoluble oligonucleotides, which are then degraded further into small acid-soluble oligonucleotides. The sequence is that of Exodeoxyribonuclease 7 large subunit from Rhizobium etli (strain CIAT 652).